A 342-amino-acid polypeptide reads, in one-letter code: Methionine import ATP-binding protein MetN (342 aa).

The ABC transporter domain occupies 2 to 241 (ITLEQVTKIY…PQQPITKRFV (240 aa)). Residue 38–45 (GYSGAGKS) coordinates ATP.

This sequence belongs to the ABC transporter superfamily. Methionine importer (TC 3.A.1.24) family. As to quaternary structure, the complex is composed of two ATP-binding proteins (MetN), two transmembrane proteins (MetI) and a solute-binding protein (MetQ).

The protein resides in the cell membrane. It carries out the reaction L-methionine(out) + ATP + H2O = L-methionine(in) + ADP + phosphate + H(+). The enzyme catalyses D-methionine(out) + ATP + H2O = D-methionine(in) + ADP + phosphate + H(+). In terms of biological role, part of the ABC transporter complex MetNIQ involved in methionine import. Responsible for energy coupling to the transport system. The chain is Methionine import ATP-binding protein MetN from Geobacillus kaustophilus (strain HTA426).